A 154-amino-acid chain; its full sequence is 6,7-dimethyl-8-ribityllumazine synthase (154 aa).

Residues Phe23, 57–59, and 81–83 each bind 5-amino-6-(D-ribitylamino)uracil; these read AFE and AVI. 86-87 lines the (2S)-2-hydroxy-3-oxobutyl phosphate pocket; it reads ST. Catalysis depends on His89, which acts as the Proton donor. Phe114 lines the 5-amino-6-(D-ribitylamino)uracil pocket. Arg128 serves as a coordination point for (2S)-2-hydroxy-3-oxobutyl phosphate.

It belongs to the DMRL synthase family.

The enzyme catalyses (2S)-2-hydroxy-3-oxobutyl phosphate + 5-amino-6-(D-ribitylamino)uracil = 6,7-dimethyl-8-(1-D-ribityl)lumazine + phosphate + 2 H2O + H(+). It functions in the pathway cofactor biosynthesis; riboflavin biosynthesis; riboflavin from 2-hydroxy-3-oxobutyl phosphate and 5-amino-6-(D-ribitylamino)uracil: step 1/2. Functionally, catalyzes the formation of 6,7-dimethyl-8-ribityllumazine by condensation of 5-amino-6-(D-ribitylamino)uracil with 3,4-dihydroxy-2-butanone 4-phosphate. This is the penultimate step in the biosynthesis of riboflavin. This chain is 6,7-dimethyl-8-ribityllumazine synthase, found in Campylobacter jejuni subsp. jejuni serotype O:2 (strain ATCC 700819 / NCTC 11168).